We begin with the raw amino-acid sequence, 114 residues long: uncharacterized protein (114 aa).

Possibly involved in pGI2 replication mechanism. This is an uncharacterized protein from Bacillus thuringiensis.